Here is a 376-residue protein sequence, read N- to C-terminus: TraB domain-containing protein (376 aa).

Met1 bears the N-acetylmethionine mark. Residues 1 to 34 (MDGEEQQPPHEANVEPVVPSEASEPVPRVLSGDP) are disordered. The segment covering 14 to 27 (VEPVVPSEASEPVP) has biased composition (low complexity). Thr65 carries the post-translational modification Phosphothreonine.

The polypeptide is TraB domain-containing protein (TRABD) (Homo sapiens (Human)).